The chain runs to 597 residues: Coronatine-insensitive protein homolog 1b (597 aa).

The 43-residue stretch at 22–64 folds into the F-box domain; the sequence is SIPEEALHLVLGYVDDPRDREAVSLVCRRWHRIDALTRKHVTV. Jasmonate is bound by residues arginine 92, arginine 353, tyrosine 391, arginine 414, and arginine 501.

Interacts with TIFY10C/JAZ8 in a coronatine-dependent manner. Interacts with TIFY3/JAZ1, TIFY6A/JAZ3, TIFY6B/JAZ4, TIFY10A/JAZ6, TIFY10B/JAZ7, TIFY11A/JAZ9, TIFY11B/JAZ10, TIFY11C/JAZ11 and TIFY11D/JAZ12 in a coronatine-dependent manner. As to expression, expressed in roots, shoots, leaf sheaths and leaf blades.

Its function is as follows. Involved in jasmonate (JA) signaling. Required for jasmonate signaling in plant defense responses. Can complement Arabidopsis coi1-1 mutant and restore jasmonate signaling. Component of SCF(COI1) E3 ubiquitin ligase complexes, which may mediate the ubiquitination and subsequent proteasomal degradation of target proteins, including TIFY/JAZ family. In Oryza sativa subsp. japonica (Rice), this protein is Coronatine-insensitive protein homolog 1b.